We begin with the raw amino-acid sequence, 46 residues long: Diuretic hormone (46 aa).

Position 46 is an isoleucine amide (isoleucine 46).

The protein belongs to the sauvagine/corticotropin-releasing factor/urotensin I family.

The protein resides in the secreted. In terms of biological role, regulation of fluid secretion. Stimulates primary urine secretion by Malpighian tubules and causes a dose-dependent stimulation of cAMP levels in the tubules. This is Diuretic hormone from Acheta domesticus (House cricket).